Here is a 469-residue protein sequence, read N- to C-terminus: UDP-N-acetylmuramoylalanine--D-glutamate ligase (469 aa).

Position 123-129 (123-129) interacts with ATP; that stretch reads GTNGKST.

The protein belongs to the MurCDEF family.

It localises to the cytoplasm. It catalyses the reaction UDP-N-acetyl-alpha-D-muramoyl-L-alanine + D-glutamate + ATP = UDP-N-acetyl-alpha-D-muramoyl-L-alanyl-D-glutamate + ADP + phosphate + H(+). It functions in the pathway cell wall biogenesis; peptidoglycan biosynthesis. Cell wall formation. Catalyzes the addition of glutamate to the nucleotide precursor UDP-N-acetylmuramoyl-L-alanine (UMA). This Caulobacter sp. (strain K31) protein is UDP-N-acetylmuramoylalanine--D-glutamate ligase.